Consider the following 346-residue polypeptide: DNA-directed RNA polymerase subunit alpha (346 aa).

The tract at residues 1–243 (MTMNNPNLTM…EQLSIWVNFE (243 aa)) is alpha N-terminal domain (alpha-NTD). The alpha C-terminal domain (alpha-CTD) stretch occupies residues 260 to 346 (LNENLFRSVE…ERWKAQQAQA (87 aa)).

The protein belongs to the RNA polymerase alpha chain family. Homodimer. The RNAP catalytic core consists of 2 alpha, 1 beta, 1 beta' and 1 omega subunit. When a sigma factor is associated with the core the holoenzyme is formed, which can initiate transcription.

The catalysed reaction is RNA(n) + a ribonucleoside 5'-triphosphate = RNA(n+1) + diphosphate. Its function is as follows. DNA-dependent RNA polymerase catalyzes the transcription of DNA into RNA using the four ribonucleoside triphosphates as substrates. The sequence is that of DNA-directed RNA polymerase subunit alpha from Sorangium cellulosum (strain So ce56) (Polyangium cellulosum (strain So ce56)).